We begin with the raw amino-acid sequence, 317 residues long: Ribosomal RNA small subunit methyltransferase A (317 aa).

Residues asparagine 37, valine 39, glycine 64, glutamate 85, aspartate 115, and asparagine 134 each coordinate S-adenosyl-L-methionine. A disordered region spans residues 293-317 (GGSDEATSTGRDARAPDISGHASAS).

It belongs to the class I-like SAM-binding methyltransferase superfamily. rRNA adenine N(6)-methyltransferase family. RsmA subfamily.

The protein localises to the cytoplasm. The enzyme catalyses adenosine(1518)/adenosine(1519) in 16S rRNA + 4 S-adenosyl-L-methionine = N(6)-dimethyladenosine(1518)/N(6)-dimethyladenosine(1519) in 16S rRNA + 4 S-adenosyl-L-homocysteine + 4 H(+). Its function is as follows. Specifically dimethylates two adjacent adenosines (A1518 and A1519) in the loop of a conserved hairpin near the 3'-end of 16S rRNA in the 30S particle. May play a critical role in biogenesis of 30S subunits. The protein is Ribosomal RNA small subunit methyltransferase A of Mycobacterium bovis (strain BCG / Tokyo 172 / ATCC 35737 / TMC 1019).